The sequence spans 422 residues: Probable biofilm formation methyltransferase WspC (422 aa).

The 264-residue stretch at 1 to 264 (MNDRFERLLK…LSFVFRRTSE (264 aa)) folds into the CheR-type methyltransferase domain. S-adenosyl-L-methionine contacts are provided by residues Thr-67, Arg-71, Glu-108, Asp-132, 186 to 187 (NL), and 205 to 206 (RN). The segment at 289–316 (ASIRPSPPPPAKPRQRLSSLVPPASGQP) is disordered. The TPR repeat unit spans residues 354 to 387 (ATVFYWLGLLSDVAGQEQEAQDFYRKALYLEPQH).

In terms of assembly, monomer.

Its function is as follows. Involved in biofilm formation. The protein is Probable biofilm formation methyltransferase WspC (wspC) of Pseudomonas aeruginosa (strain ATCC 15692 / DSM 22644 / CIP 104116 / JCM 14847 / LMG 12228 / 1C / PRS 101 / PAO1).